The chain runs to 554 residues: Suppressor of hairless homolog (554 aa).

The segment at 1-31 (MYHPHHLPAHGQVQSHQHREDAAATSSRDVN) is disordered. 3 DNA-binding regions span residues 83 to 90 (KSYGNEKR), 218 to 227 (RLRSQTVSTR), and 291 to 323 (RKVD…ERMY). An IPT/TIG domain is found at 381–471 (PNVHSLQLNG…YPTNLTFTFT (91 aa)). The segment at 489–554 (GSKRPSASMP…NGANMLRTAS (66 aa)) is disordered. The span at 508–519 (DSGRGNESDRGD) shows a compositional bias: basic and acidic residues.

Belongs to the Su(H) family. In terms of assembly, interacts with activated Notch proteins.

The protein localises to the nucleus. In terms of biological role, transcriptional regulator that plays a central role in Notch signaling, a signaling pathway involved in cell-cell communication that regulates a broad spectrum of cell-fate determinations. Acts as a transcriptional repressor when it is not associated with Notch proteins. When associated with some Notch protein, it acts as a transcriptional activator that activates transcription of Notch target genes. Required for the transcriptional expression of Brachyury, suggesting that it participates in notochord differentiation. In Ciona intestinalis (Transparent sea squirt), this protein is Suppressor of hairless homolog (Su(H)).